The following is a 6857-amino-acid chain: Replicase polyprotein 1ab (6857 aa).

The region spanning 1679-1860 is the Macro domain; sequence FEQYYEFKIG…QYNQAFAVIK (182 aa). Residues 2158–2191 form a disordered region; that stretch reads QVGQGGQQDGQVDQQIKESEQVVEPSAPSGQESP. Transmembrane regions (helical) follow at residues 2303–2323, 2330–2350, 2385–2405, 2535–2555, 2639–2659, 2664–2684, 2889–2909, 3057–3077, 3106–3126, and 3142–3162; these read LTYN…FGVL, TPFY…LMIW, LVQW…DYVV, LFYS…YVLF, VTVS…VVVL, FIWF…IILF, TTLV…LMVG, IISP…FLIL, VLFV…LALW, and LFIL…GFVF. Positions 2303 to 2683 are HD1; sequence LTYNIKFKLI…VMMPVFVIIL (381 aa). An HD2 region spans residues 2889 to 3162; that stretch reads TTLVIVMGVL…FLFMVGGFVF (274 aa). Residues His-3304, Glu-3347, and Ser-3416 each act as charge relay system; for 3C-like serine proteinase activity in the active site. The interval 3555-3738 is HD3; sequence HLHFIFSIYF…IVIVLSFRVF (184 aa). Transmembrane regions (helical) follow at residues 3556 to 3575, 3580 to 3602, 3611 to 3631, 3640 to 3660, 3663 to 3683, 3698 to 3718, and 3723 to 3738; these read LHFI…YWWL, SVVL…NVLF, LAVT…LGFL, SLII…VVNV, AIFV…LGIV, AVFT…LLLF, and LMSF…FRVF. The region spanning 4566–4797 is the NiRAN domain; it reads DFKLLRGAWS…ANEMEIPTDY (232 aa). In terms of domain architecture, RdRp catalytic spans 5105 to 5256; that stretch reads FDVFGSDYTK…FSKPEALKIF (152 aa). A CV ZBD domain is found at 5413-5528; it reads FDKVCFCCPN…NGVAQLLTSV (116 aa). Zn(2+)-binding residues include Cys-5417, Cys-5420, Cys-5428, Cys-5431, Cys-5438, Cys-5441, His-5445, His-5451, Cys-5460, Cys-5462, Cys-5483, and Cys-5486. Positions 5633–5812 constitute a (+)RNA virus helicase ATP-binding domain; that stretch reads NQPWRLATCF…LQLATQKRYL (180 aa). Residues 5813-5972 enclose the (+)RNA virus helicase C-terminal domain; sequence TACYRCPPQI…FGMEKQSDFN (160 aa). An ExoN domain is found at 5970–6183; sequence DFNIIPEVSS…YLASYEAAFK (214 aa). Residues Asp-5984, Glu-5986, and Asp-6085 contribute to the active site. The Zn(2+) site is built by His-6149, Cys-6153, and His-6157. Active-site residues include His-6161 and Asp-6166. Cys-6172 serves as a coordination point for Zn(2+). Positions 6451–6591 constitute a NendoU domain; it reads LPDTLFSTGR…GEDDIQTFYP (141 aa). Catalysis depends on residues His-6487, His-6504, Lys-6536, Lys-6633, Asp-6709, Lys-6737, and Glu-6771. Residues 6593–6857 enclose the Nidovirus-type SAM-dependent 2'-O-MTase domain; that stretch reads KDFVRSYYEW…EVPMLCQMEH (265 aa).

In terms of processing, specific enzymatic cleavages in vivo by its own protease yield mature proteins. 3CL-PRO is autocatalytically processed.

The protein localises to the host membrane. The enzyme catalyses RNA(n) + a ribonucleoside 5'-triphosphate = RNA(n+1) + diphosphate. It catalyses the reaction ATP + H2O = ADP + phosphate + H(+). In terms of biological role, the 3C-like serine proteinase is responsible for the majority of cleavages. The helicase which contains a zinc finger structure displays RNA and DNA duplex-unwinding activities with 5' to 3' polarity. Its function is as follows. Acts on both ssRNA and dsRNA in a 3' to 5' direction. Functionally, nendoU is a Mn(2+)-dependent, uridylate-specific enzyme, which leaves 2'-3'-cyclic phosphates 5' to the cleaved bond. This chain is Replicase polyprotein 1ab (rep), found in Equus caballus (Horse).